Reading from the N-terminus, the 170-residue chain is UPF0316 protein CLK_3798 (170 aa).

Transmembrane regions (helical) follow at residues 1-21 (MLSYYAFIFFAKIMEVALMTI) and 36-56 (IIGFIEVTIWLYVTSSVLSGI).

This sequence belongs to the UPF0316 family.

It localises to the cell membrane. The chain is UPF0316 protein CLK_3798 from Clostridium botulinum (strain Loch Maree / Type A3).